The primary structure comprises 59 residues: UPF0181 protein YoaH (59 aa).

This sequence belongs to the UPF0181 family.

In Salmonella arizonae (strain ATCC BAA-731 / CDC346-86 / RSK2980), this protein is UPF0181 protein YoaH.